A 439-amino-acid chain; its full sequence is MFVDREEELKALNEKLDSNNFEFIVIYGRRRIGKTKLALKSVENREHIYYLAVEGDNLKHFKRYASKVEPTIEYAKEDWEAYFNFLKDKIIIIDEFPNLIKENPNVLSLFQRIVDIHLKNTKTKLIILGSSISMMGEKVLSYKSPLYGRKTGVLKIKPLKFKHLKEFFPKAIWEELVEIYGFADGIPYYLEKVKLPFWDYLDKEIKRVDSFLRYEVDFLMKYEFEEPTTYKKILEAIAFGNHTLGEIKNYLGFKHSDLTPYLKNLIEVEFIERQTPITESVKSKKGRYYIKDNFIAFYFRYIFPNLSAIEEGIFDIEEIKADYNQYLGFVFEKVAKEFLIELNKMNKLPFKFLKIGRWWHRGEEIDLIALNDNDKKALFVEVKWKDLKDRDVKKIYRDLYRKSKLVGLDDYEKYYAIVGKKIESKENGDCLLFDLEDFS.

28 to 35 (GRRRIGKT) is a binding site for ATP.

This is an uncharacterized protein from Methanocaldococcus jannaschii (strain ATCC 43067 / DSM 2661 / JAL-1 / JCM 10045 / NBRC 100440) (Methanococcus jannaschii).